The chain runs to 1114 residues: Probable guanine nucleotide exchange factor MCF2L2 (1114 aa).

The region spanning 11–193 (PQELTRRLAT…ELGGTLEYRH (183 aa)) is the CRAL-TRIO domain. A Spectrin repeat occupies 323-428 (QHFEHDFCKA…KWDILGKSLE (106 aa)). The interval 530 to 614 (QTRPVQPVAP…NPELEQQARL (85 aa)) is disordered. Residues 546-559 (KWVSSKTSQPSTSV) show a composition bias toward polar residues. A compositionally biased stretch (basic and acidic residues) spans 577 to 606 (LNSRGKEDDETKFEVKSEEIFESHHERGNP). The 204-residue stretch at 619–822 (PRRRIIRDLL…EDLIKSCELA (204 aa)) folds into the DH domain. Residues 834-954 (DIGKLGKLLL…WFSEISKLLM (121 aa)) enclose the PH domain. The segment covering 962–975 (DQGNPQFEMSTSKG) has biased composition (polar residues). Residues 962-1114 (DQGNPQFEMS…LRPRTSAQES (153 aa)) form a disordered region. Over residues 986–997 (NMERATTSKEDP) the composition is skewed to basic and acidic residues. The segment covering 1017–1028 (TFEDCEGAEDME) has biased composition (acidic residues). 2 stretches are compositionally biased toward basic and acidic residues: residues 1043–1067 (DDSHETCSSKSAFLERGESSQGEKE) and 1074–1084 (TATRSTEEERA).

The protein belongs to the MCF2 family. In terms of tissue distribution, significantly expressed in brain and modestly in pancreas, brain and testis.

Functionally, probably functions as a guanine nucleotide exchange factor. In Homo sapiens (Human), this protein is Probable guanine nucleotide exchange factor MCF2L2 (MCF2L2).